We begin with the raw amino-acid sequence, 69 residues long: Cytochrome b-c1 complex subunit 6 (69 aa).

Cystine bridges form between C17–C59 and C31–C45.

The protein belongs to the UQCRH/QCR6 family. Component of the ubiquinol-cytochrome c oxidoreductase (cytochrome b-c1 complex, complex III, CIII), a multisubunit enzyme composed of 3 respiratory subunits cytochrome b, cytochrome c1 and Rieske protein, 2 core protein subunits, and additional low-molecular weight protein subunits. The complex exists as an obligatory dimer and forms supercomplexes (SCs) in the inner mitochondrial membrane with cytochrome c oxidase (complex IV, CIV).

It is found in the mitochondrion inner membrane. Functionally, component of the ubiquinol-cytochrome c oxidoreductase, a multisubunit transmembrane complex that is part of the mitochondrial electron transport chain which drives oxidative phosphorylation. The respiratory chain contains 3 multisubunit complexes succinate dehydrogenase (complex II, CII), ubiquinol-cytochrome c oxidoreductase (cytochrome b-c1 complex, complex III, CIII) and cytochrome c oxidase (complex IV, CIV), that cooperate to transfer electrons derived from NADH and succinate to molecular oxygen, creating an electrochemical gradient over the inner membrane that drives transmembrane transport and the ATP synthase. The cytochrome b-c1 complex catalyzes electron transfer from ubiquinol to cytochrome c, linking this redox reaction to translocation of protons across the mitochondrial inner membrane, with protons being carried across the membrane as hydrogens on the quinol. In the process called Q cycle, 2 protons are consumed from the matrix, 4 protons are released into the intermembrane space and 2 electrons are passed to cytochrome c. This chain is Cytochrome b-c1 complex subunit 6, found in Solanum tuberosum (Potato).